Consider the following 348-residue polypeptide: Ferredoxin--NADP reductase 1 (348 aa).

FAD-binding residues include aspartate 33, lysine 41, tyrosine 45, valine 85, leucine 120, aspartate 287, and serine 328.

The protein belongs to the ferredoxin--NADP reductase type 2 family. In terms of assembly, homodimer. Requires FAD as cofactor.

It catalyses the reaction 2 reduced [2Fe-2S]-[ferredoxin] + NADP(+) + H(+) = 2 oxidized [2Fe-2S]-[ferredoxin] + NADPH. The polypeptide is Ferredoxin--NADP reductase 1 (Oceanobacillus iheyensis (strain DSM 14371 / CIP 107618 / JCM 11309 / KCTC 3954 / HTE831)).